We begin with the raw amino-acid sequence, 61 residues long: Small ribosomal subunit protein uS14 (61 aa).

Zn(2+) is bound by residues cysteine 24, cysteine 27, cysteine 40, and cysteine 43.

Belongs to the universal ribosomal protein uS14 family. Zinc-binding uS14 subfamily. In terms of assembly, part of the 30S ribosomal subunit. Contacts proteins S3 and S10. Requires Zn(2+) as cofactor.

Functionally, binds 16S rRNA, required for the assembly of 30S particles and may also be responsible for determining the conformation of the 16S rRNA at the A site. In Nitratidesulfovibrio vulgaris (strain ATCC 29579 / DSM 644 / CCUG 34227 / NCIMB 8303 / VKM B-1760 / Hildenborough) (Desulfovibrio vulgaris), this protein is Small ribosomal subunit protein uS14.